The primary structure comprises 193 residues: uncharacterized protein (193 aa).

Disordered stretches follow at residues 1-21, 53-96, and 114-136; these read MPKG…APPL, GAPA…PWPS, and SGPE…ASAS. The span at 53–70 shows a compositional bias: low complexity; the sequence is GAPAGGAPAAGGRSLPQG. The segment covering 71-95 has biased composition (pro residues); it reads PSAPAPPPPPGLGPPSERPCPPPWP. The span at 116–127 shows a compositional bias: low complexity; sequence PEAAASPLAPGP.

This is an uncharacterized protein from Bos taurus (Bovine).